The chain runs to 214 residues: uncharacterized protein (214 aa).

CBS domains lie at 7–65 and 69–129; these read MDKN…KKPI and MRPV…EIPV.

This is an uncharacterized protein from Methanocaldococcus jannaschii (strain ATCC 43067 / DSM 2661 / JAL-1 / JCM 10045 / NBRC 100440) (Methanococcus jannaschii).